We begin with the raw amino-acid sequence, 152 residues long: Protein-export protein SecB (152 aa).

The protein belongs to the SecB family. Homotetramer, a dimer of dimers. One homotetramer interacts with 1 SecA dimer.

It is found in the cytoplasm. In terms of biological role, one of the proteins required for the normal export of preproteins out of the cell cytoplasm. It is a molecular chaperone that binds to a subset of precursor proteins, maintaining them in a translocation-competent state. It also specifically binds to its receptor SecA. The protein is Protein-export protein SecB of Thiobacillus denitrificans (strain ATCC 25259 / T1).